A 427-amino-acid chain; its full sequence is Putative F-box protein At3g44060 (427 aa).

The 46-residue stretch at 1-46 folds into the F-box domain; the sequence is MDCLPDDLLVQILYLLPTKEAVSTSVLSKRWRTLFTRSDNLDFHDP.

The polypeptide is Putative F-box protein At3g44060 (Arabidopsis thaliana (Mouse-ear cress)).